Here is a 266-residue protein sequence, read N- to C-terminus: Translation initiation factor 2 subunit alpha (266 aa).

The S1 motif domain maps to 12 to 83; that stretch reads GEILIATVKQ…RKGTVDVSLK (72 aa).

Belongs to the eIF-2-alpha family. As to quaternary structure, heterotrimer composed of an alpha, a beta and a gamma chain.

EIF-2 functions in the early steps of protein synthesis by forming a ternary complex with GTP and initiator tRNA. The protein is Translation initiation factor 2 subunit alpha of Saccharolobus islandicus (strain Y.N.15.51 / Yellowstone #2) (Sulfolobus islandicus).